Here is a 1373-residue protein sequence, read N- to C-terminus: MVSLRDNIEAQPLSHNRRIRKNFGHINLVADIPNLIEIQKNSYEKNFLQLNIKDSERKNKGLQSILNSIFPISDSSNVANLEFVKYEFDTPKYDVEECSQRSLSYAAPLKVTLRLSIWDIDEDTGTREIKGIKEQEVYMGDIPLMTKNGTFIINGTERVVVSQMHRSPGVFFYHDEGKVHSSGKLLYSARVIPYRGSWLDLEFDAKDVIYFRIDRKRKLYATTLLRAIGMSTEEIIKFYYNSVTYKLVKNKGWAVKFIPQHITAHRLTSDLVDADTGNILLKAGQKITPRLAKKYFGEGLNNILVAHETLIGKYLSEDLRDPASDEVLAKIGEMITADMLNVINDLKIKNVNVLVINPQSGPYIRNTLFADKNQDREAALCDIFRVLRPGEPANIEAAESLFYNLFFDTERYDLSEVGRIKMNSRLELNISEEVTVLTIDDIKNIVRVLVELKDGKGIIDDIDHLGNRRVRSVGELIENQFRIGLVRMEKSVIERMSAGDVDTVMPHDLVNSKILVSVVKEFFSTSQLSQFMDQTNPLSEITHKRRLSALGPGGLSRDRAGFEVRDVHPTHYGRICPIETPEGQNIGLINSMATYARINKHGFIESPYRRVKDGCVTDEVVYLSAIEEGKYKIGQANSKINKDGKLQGEFINCRVEGGNFVMVEPYEVDFIDVTPMQVVSVAASLIPFLENDDANRALMGSNMQRQAVPLIKTDAPFVGTGVEGVVAKDSGASVLALHDGIVEQVDSNRIVIRTLEQKVDGSPSVDIYNLLKFQKSNHNTCINQKPLVKVGHYVKKNDIIADGPSTDNGEIALGRNVLVAFLPWNGYNFEDSILISERIVKEDVFTSIHIEEFEVIARDTRLGPEEITRDIPNVSEEALRHLDEVGIIYIGAEVKAGDILVGKVTPKSESPITPEEKLLRAIFGEKAFDVKDSSLHVPSGVSGTVVEVRVFSRRGVEKDQRAIAIEKQQIEKFAKDRDDELEIIEHFVFSWLEKLLVGQVIINGPKQVKVGQTITTEMLKGLSKGQFWQITVEDANVMNEIEQIKTHYDEKKEALDKRFATKVEKLQSGDDLPQGALKVVKVFIATKHKLQPGDKMAGRHGNKGVISRIVPEEDMPFLEDGTVVDIVLNPLGLPSRMNIGQILETHLGWASINLAKKISTLVKEYKNKHIGIEQIKKFLIELYGENINSILERPEEEIIAFCKKVSKGVHFATPVFDGAKVQDVKDMLKLAGQDPSGQVKLIDGRTGEYFDRLVTVGQKYLLKLHHLVDNKIHSRSIGPYSLVTQQPLGGKSHFGGQRFGEMECWALQAYGAAYTLQEMLTVKSDDVNGRIKTYDSIVRGENNFESGIPESFNVMIKEFRSLCLNVKLEVTSS.

This sequence belongs to the RNA polymerase beta chain family. In terms of assembly, the RNAP catalytic core consists of 2 alpha, 1 beta, 1 beta' and 1 omega subunit. When a sigma factor is associated with the core the holoenzyme is formed, which can initiate transcription.

It catalyses the reaction RNA(n) + a ribonucleoside 5'-triphosphate = RNA(n+1) + diphosphate. Its function is as follows. DNA-dependent RNA polymerase catalyzes the transcription of DNA into RNA using the four ribonucleoside triphosphates as substrates. The polypeptide is DNA-directed RNA polymerase subunit beta (Rickettsia rickettsii (strain Iowa)).